Reading from the N-terminus, the 457-residue chain is PDZ and LIM domain protein 7 (457 aa).

A PDZ domain is found at 1–85 (MDSFKVVLEG…RLSLGLSRAQ (85 aa)). Ser78 carries the phosphoserine modification. Disordered stretches follow at residues 81-132 (LSRA…LSQN) and 186-226 (FMKK…PWAV). Thr96 carries the phosphothreonine modification. Arg103 carries the asymmetric dimethylarginine modification. Ser111 bears the Phosphoserine mark. Phosphoserine is present on Ser247. 3 LIM zinc-binding domains span residues 280-338 (PVCH…VRYA), 339-398 (PSCA…MFGT), and 399-457 (KCRG…FSHV).

In terms of assembly, binds via its LIM zinc-binding 3 domain (LIM 3) domain to endocytic codes of INSR, but not with those of IGF1R, LDLR, TFRC, or EGFR. Interacts with various PKC isoforms through the LIM zinc-binding domains. Binds to RET in a phosphorylation-independent manner via its LIM zinc-binding 2 domain (LIM 2). Probably part of a complex with SHC and the RET dimer. Interacts with TPM2, TBX4 and TBX5. Interacts (via LIM domains) with SIPA1L1. Expressed in kidney, heart, brain, lung, and skeletal muscle. Overexpression results in the synthesis of an unidentified soluble factor which acts on cells in the osteoblast lineage causing them to differentiate and secrete BMP-2.

The protein localises to the cytoplasm. The protein resides in the cytoskeleton. In terms of biological role, may function as a scaffold on which the coordinated assembly of proteins can occur. May play a role as an adapter that, via its PDZ domain, localizes LIM-binding proteins to actin filaments of both skeletal muscle and nonmuscle tissues. Involved in both of the two fundamental mechanisms of bone formation, direct bone formation (e.g. embryonic flat bones mandible and cranium), and endochondral bone formation (e.g. embryonic long bone development). Plays a role during fracture repair. Involved in BMP6 signaling pathway. This Rattus norvegicus (Rat) protein is PDZ and LIM domain protein 7 (Pdlim7).